A 387-amino-acid polypeptide reads, in one-letter code: Protein arginine N-methyltransferase 1 (387 aa).

The interval 1–60 (MDQRKGSGSDANGGLAEATASRLRFEDPDEVMEENPAAAAATVGAEEEGGEGGGGEEVIG) is disordered. Positions 34-44 (ENPAAAAATVG) are enriched in low complexity. The SAM-dependent MTase PRMT-type domain occupies 66–387 (ADYYFDSYSH…VSRTQHYKMR (322 aa)). 5 residues coordinate S-adenosyl-L-methionine: H79, R88, G112, E134, and E163. Catalysis depends on residues E178 and E187.

This sequence belongs to the class I-like SAM-binding methyltransferase superfamily. Protein arginine N-methyltransferase family.

The protein localises to the nucleus. The catalysed reaction is L-arginyl-[protein] + S-adenosyl-L-methionine = N(omega)-methyl-L-arginyl-[protein] + S-adenosyl-L-homocysteine + H(+). The enzyme catalyses L-arginyl-[protein] + 2 S-adenosyl-L-methionine = N(omega),N(omega)-dimethyl-L-arginyl-[protein] + 2 S-adenosyl-L-homocysteine + 2 H(+). In terms of biological role, arginine methyltransferase that methylates (mono and asymmetric dimethylation) the guanidino nitrogens of arginyl residues present in target proteins. The polypeptide is Protein arginine N-methyltransferase 1 (PRMT1) (Oryza sativa subsp. indica (Rice)).